The sequence spans 261 residues: UPF0246 protein Daci_5283 (261 aa).

Belongs to the UPF0246 family.

The protein is UPF0246 protein Daci_5283 of Delftia acidovorans (strain DSM 14801 / SPH-1).